Reading from the N-terminus, the 172-residue chain is Fimbrial-like protein FimF (172 aa).

A signal peptide spans 1–21 (MILRRVFIAIGCVLFSPLSQA). An intrachain disulfide couples Cys41 to Cys81.

It belongs to the fimbrial protein family.

Its subcellular location is the fimbrium. This is Fimbrial-like protein FimF (fimF) from Salmonella typhimurium (strain LT2 / SGSC1412 / ATCC 700720).